We begin with the raw amino-acid sequence, 224 residues long: UPF0758 protein VSAL_I0192 (224 aa).

The MPN domain maps to 102–224 (ALTSPEHTKR…IVSFAERGWI (123 aa)). The Zn(2+) site is built by histidine 173, histidine 175, and aspartate 186. The JAMM motif signature appears at 173–186 (HNHPSGVAEPSQAD).

The protein belongs to the UPF0758 family.

The chain is UPF0758 protein VSAL_I0192 from Aliivibrio salmonicida (strain LFI1238) (Vibrio salmonicida (strain LFI1238)).